The sequence spans 80 residues: UPF0346 protein LSEI_1394 (80 aa).

This sequence belongs to the UPF0346 family.

This chain is UPF0346 protein LSEI_1394, found in Lacticaseibacillus paracasei (strain ATCC 334 / BCRC 17002 / CCUG 31169 / CIP 107868 / KCTC 3260 / NRRL B-441) (Lactobacillus paracasei).